The primary structure comprises 536 residues: MIMLRIPTRSYCSPSKLIKGVGLSPLKKSLLSKKIKEDIHPSLPVRTRFAPSPTGFLHLGSLRTALYNYLLARNTNGQFLLRLEDTDQKRLIEGAEENIYEILKWCNINYDETPIKQSERKLIYDKYVKILLSSGKAYRCFCSKERLNDLRHSAMELKPPSMASYDRCCAHLGEEEIKSKLAQGIPFTVRFKSPERYPTFTDLLHGQINLQPQVNFNDKRYDDLILVKSDKLPTYHLANVVDDHLMGITHVIRGEEWLPSTPKHIALYNAFGWACPKFIHIPLLTTVGDKKLSKRKGDMSISDLKRQGVLPEALINFCALFGWSPPRDLASKKHECFSMEELETIFNLNGLTKGNAKVDDKKLWFFNKHFLQKRILNPSTLRELVDDIMPSLESIYNTSTISREKVAKILLNCGGSLSRINDFHDEFYYFFEKPKYNDNDAVTKFLSKNESRHIAHLLKKLGQFQEGTDAQEVESMVETMYYENGFSRKVTYQAMRFALAGCHPGAKIAAMIDILGIKESNKRLSEGLQFLQREKK.

Residue 48-50 (RFA) coordinates L-glutamate. The 'HIGH' region signature appears at 53-61 (PTGFLHLGS). H58 serves as a coordination point for ATP. Residues E84, 235 to 239 (YHLAN), and R253 contribute to the L-glutamate site. ATP contacts are provided by residues E256 and 291-295 (KLSKR). Residues 291–295 (KLSKR) carry the 'KMSKS' region motif.

This sequence belongs to the class-I aminoacyl-tRNA synthetase family. Glutamate--tRNA ligase type 1 subfamily.

Its subcellular location is the mitochondrion matrix. It carries out the reaction tRNA(Glu) + L-glutamate + ATP = L-glutamyl-tRNA(Glu) + AMP + diphosphate. Catalyzes the attachment of glutamate to tRNA(Glu) in a two-step reaction: glutamate is first activated by ATP to form Glu-AMP and then transferred to the acceptor end of tRNA(Glu). This is Glutamate--tRNA ligase, mitochondrial (MSE1) from Saccharomyces cerevisiae (strain ATCC 204508 / S288c) (Baker's yeast).